We begin with the raw amino-acid sequence, 720 residues long: DNA gyrase subunit B (720 aa).

A compositionally biased stretch (low complexity) spans 1–26; the sequence is MVDAMPENPAEEPTAASAAPNPEAVP. Residues 1–42 are disordered; it reads MVDAMPENPAEEPTAASAAPNPEAVPDAVGQPEAPVKDRKVP. In terms of domain architecture, Toprim spans 498-612; that stretch reads CEVYIVEGDS…AGHVFLAQPP (115 aa). Positions 504, 577, and 579 each coordinate Mg(2+).

This sequence belongs to the type II topoisomerase GyrB family. In terms of assembly, heterotetramer, composed of two GyrA and two GyrB chains. In the heterotetramer, GyrA contains the active site tyrosine that forms a transient covalent intermediate with the DNA, while GyrB binds cofactors and catalyzes ATP hydrolysis. Mg(2+) is required as a cofactor. Mn(2+) serves as cofactor. Requires Ca(2+) as cofactor.

It is found in the cytoplasm. It carries out the reaction ATP-dependent breakage, passage and rejoining of double-stranded DNA.. Supercoiling activity inhibited by novobiocin and coumermycin, DNA wrapping around gyrase is not inhibited. Its function is as follows. A type II topoisomerase that negatively supercoils DNA in an ATP-dependent manner. About 140 bp of DNA wraps around gyrase in the presence or absence of ATP, when ATP is added negative supercoils are made. In terms of biological role, a type II topoisomerase that negatively supercoils closed circular double-stranded (ds) DNA in an ATP-dependent manner to modulate DNA topology and maintain chromosomes in an underwound state. Negative supercoiling favors strand separation, and DNA replication, transcription, recombination and repair, all of which involve strand separation. Also able to catalyze the interconversion of other topological isomers of dsDNA rings, including catenanes and knotted rings. Type II topoisomerases break and join 2 DNA strands simultaneously in an ATP-dependent manner. This is DNA gyrase subunit B from Micrococcus luteus (strain ATCC 4698 / DSM 20030 / JCM 1464 / CCM 169 / CCUG 5858 / IAM 1056 / NBRC 3333 / NCIMB 9278 / NCTC 2665 / VKM Ac-2230) (Micrococcus lysodeikticus).